The primary structure comprises 250 residues: 2,3-bisphosphoglycerate-dependent phosphoglycerate mutase (250 aa).

Residues 10–17, 23–24, Arg-62, 89–92, Lys-100, 116–117, and 185–186 contribute to the substrate site; these read RHGESQWN, TG, ERHY, RR, and GN. Residue His-11 is the Tele-phosphohistidine intermediate of the active site. Catalysis depends on Glu-89, which acts as the Proton donor/acceptor.

It belongs to the phosphoglycerate mutase family. BPG-dependent PGAM subfamily. Homodimer.

It catalyses the reaction (2R)-2-phosphoglycerate = (2R)-3-phosphoglycerate. Its pathway is carbohydrate degradation; glycolysis; pyruvate from D-glyceraldehyde 3-phosphate: step 3/5. Functionally, catalyzes the interconversion of 2-phosphoglycerate and 3-phosphoglycerate. This Salmonella dublin (strain CT_02021853) protein is 2,3-bisphosphoglycerate-dependent phosphoglycerate mutase.